A 303-amino-acid chain; its full sequence is MKTEGLHHVTAFARDPQENLRFYTEVLGLRLVKKTVNFDDPGTYHFYFGNQNGDPGTIMTFFPFQGSGQGTVGKGQAGRVYFSVPSGSLSFWKERLEKSGLSLEEKTLFGEKGLIFDDTEDLPLAIMEDAKSGKSEWTPDGITTNEAITGMKGVLLYSYDPQATIQLLTESFGYTKVAEEDQIVRLASSAAVGGVIDVHLHPEKRGVGGYGTVHHVAFRTKKKEQAKWLPIIAENHLPSSEILDREYFTSVYFREKGGILFEIATDEPGFMTDETFAELGTSLKLPEWLEKHRQQITDILPEL.

VOC domains follow at residues 5–129 (GLHH…IMED) and 150–266 (GMKG…IATD). Fe cation is bound by residues histidine 8, histidine 215, and glutamate 262.

The protein belongs to the extradiol ring-cleavage dioxygenase family. The cofactor is Fe(2+).

It localises to the cytoplasm. In terms of biological role, putative ring-cleavage dioxygenase that may contribute to the degradation of aromatic compounds. This is Putative ring-cleaving dioxygenase MhqE (mhqE) from Bacillus subtilis (strain 168).